Here is a 281-residue protein sequence, read N- to C-terminus: MQKKYYELFFIVEERYKNLFLDFAFDLGIEAIEEKDNGVYIRSHESLEDLSWALEIFAQKLTTTFNLNHKIISNLSLVEKENKDWIQEYKKGIKPILVDNVYIHTTWQEEKKNCINIKINPALAFGSGHHESTYSCVKFLQKFSKSKLRALDLGCGSGILGIIMAKFGCNVEICDTDELAIDSSLENARLNGVDFYKAWCGSIDKANGLYNLIVANIIADVILILEKDIKNHLEDNAILILSGILDKYSTRIKEKFQDLELIDEMQINEWCSFVYKNNKKG.

Threonine 133, glycine 154, aspartate 175, and asparagine 216 together coordinate S-adenosyl-L-methionine.

It belongs to the methyltransferase superfamily. PrmA family.

The protein resides in the cytoplasm. It carries out the reaction L-lysyl-[protein] + 3 S-adenosyl-L-methionine = N(6),N(6),N(6)-trimethyl-L-lysyl-[protein] + 3 S-adenosyl-L-homocysteine + 3 H(+). In terms of biological role, methylates ribosomal protein L11. This chain is Ribosomal protein L11 methyltransferase, found in Campylobacter jejuni subsp. jejuni serotype O:23/36 (strain 81-176).